Reading from the N-terminus, the 309-residue chain is (S)-sulfolactate dehydrogenase (309 aa).

Residues 151 to 152 (GI), D171, 231 to 233 (TAR), and D257 each bind NAD(+). Residue R233 is part of the active site. E262 is an active-site residue. Catalysis depends on H281, which acts as the Proton donor. Position 281–284 (281–284 (HIAG)) interacts with NAD(+).

Belongs to the D-isomer specific 2-hydroxyacid dehydrogenase family.

The catalysed reaction is (2S)-3-sulfolactate + NAD(+) = 3-sulfopyruvate + NADH + H(+). Its function is as follows. Dehydrogenase of the (R,S)-sulfolactate degradation pathway that only acts on the (S)-enantiomer of 3-sulfolactate. Together with ComC, provides a racemase system that converts (2S)-3-sulfolactate to (2R)-3-sulfolactate, which is degraded further by (2R)-sulfolactate sulfo-lyase. Specific for NAD. Also able to form sulfolactate from sulfopyruvate. The polypeptide is (S)-sulfolactate dehydrogenase (slcC) (Chromohalobacter salexigens (strain ATCC BAA-138 / DSM 3043 / CIP 106854 / NCIMB 13768 / 1H11)).